The primary structure comprises 257 residues: Probable amino-acid ABC transporter-binding protein HI_1080 (257 aa).

Positions M1 to A23 are cleaved as a signal peptide.

This sequence belongs to the bacterial solute-binding protein 3 family.

The protein localises to the periplasm. Probably part of a binding-protein-dependent transport system for an amino acid. In Haemophilus influenzae (strain ATCC 51907 / DSM 11121 / KW20 / Rd), this protein is Probable amino-acid ABC transporter-binding protein HI_1080.